A 140-amino-acid polypeptide reads, in one-letter code: Coiled-coil domain-containing protein 126 (140 aa).

Residues 1–35 (MFRTISRKNMSQKLSFLLLVFGLIWGLMLLHYTLQ) form the signal peptide. N110 carries N-linked (GlcNAc...) asparagine glycosylation. Residues 118–130 (NGTNGNLVPVTTN) show a composition bias toward low complexity. The interval 118–140 (NGTNGNLVPVTTNKRTSVSGSVR) is disordered. The segment covering 131–140 (KRTSVSGSVR) has biased composition (polar residues).

It localises to the secreted. This chain is Coiled-coil domain-containing protein 126 (Ccdc126), found in Mus musculus (Mouse).